A 378-amino-acid polypeptide reads, in one-letter code: ATP phosphoribosyltransferase regulatory subunit (378 aa).

Belongs to the class-II aminoacyl-tRNA synthetase family. HisZ subfamily. Heteromultimer composed of HisG and HisZ subunits.

The protein localises to the cytoplasm. It participates in amino-acid biosynthesis; L-histidine biosynthesis; L-histidine from 5-phospho-alpha-D-ribose 1-diphosphate: step 1/9. In terms of biological role, required for the first step of histidine biosynthesis. May allow the feedback regulation of ATP phosphoribosyltransferase activity by histidine. This is ATP phosphoribosyltransferase regulatory subunit from Brucella abortus (strain 2308).